Consider the following 146-residue polypeptide: MRVVLQRSKEASVTVDGEIVGQIPFGLTLLVGITHEDTEKDATYIAEKIANLRIFEDESGKMNHSVLDVEGQVLSISQFTLYGDCRKGRRPNFMDAAKPDYAEHLYDFFNEEVRKQGLHVETGEFGAMMDVSLINDGPVTLIVESK.

The Gly-cisPro motif, important for rejection of L-amino acids signature appears at 137 to 138; sequence GP.

Belongs to the DTD family. As to quaternary structure, homodimer.

It is found in the cytoplasm. It catalyses the reaction glycyl-tRNA(Ala) + H2O = tRNA(Ala) + glycine + H(+). The catalysed reaction is a D-aminoacyl-tRNA + H2O = a tRNA + a D-alpha-amino acid + H(+). An aminoacyl-tRNA editing enzyme that deacylates mischarged D-aminoacyl-tRNAs. Also deacylates mischarged glycyl-tRNA(Ala), protecting cells against glycine mischarging by AlaRS. Acts via tRNA-based rather than protein-based catalysis; rejects L-amino acids rather than detecting D-amino acids in the active site. By recycling D-aminoacyl-tRNA to D-amino acids and free tRNA molecules, this enzyme counteracts the toxicity associated with the formation of D-aminoacyl-tRNA entities in vivo and helps enforce protein L-homochirality. This chain is D-aminoacyl-tRNA deacylase, found in Bacillus thuringiensis (strain Al Hakam).